The sequence spans 455 residues: Major facilitator superfamily domain-containing protein 10 (455 aa).

Helical transmembrane passes span 27–47 (VVFLGLLLDLLAFTLLLPLLP), 86–106 (VLFGGLIGSAFSVLQFLCAPL), 113–135 (CLGRRPVMLLCLMGVATSYAVWA), 148–168 (LIGGISKGNVSLSTAIVADLG), 176–196 (GMAVIGVAFSLGFTLGPMLGA), 202–222 (MAPWFALLFAASDLLFIFCFL), 275–295 (LGLVYFLYLFLFSGLEYTLSF), 310–327 (KMFFLIGLTMATIQGAYA), 336–356 (VAAVKRALLLLVPAFLLIGWG), 359–379 (LPVLGLGLLLYSFAAAVVVPC), and 421–441 (LAGAQACFTTWSGLFLLPFFL).

It belongs to the major facilitator superfamily. Expressed in luminal membrane of renal tubules (at protein level). Detected in all tissues tested with higher expression in heart, splee, kidney, leukocytes and prostate.

Its subcellular location is the nucleus inner membrane. The protein resides in the cell membrane. Probable organic anion transporter which may serve as a transporter for some non-steroidal anti-inflammatory drugs (NSAIDs) as well as other organic anions across the luminal membranes of renal proximal tubules at the final excretion step into the urine. The protein is Major facilitator superfamily domain-containing protein 10 (MFSD10) of Homo sapiens (Human).